The sequence spans 327 residues: GDP-mannose transporter (327 aa).

The Cytoplasmic segment spans residues 1–4 (MESS). A helical membrane pass occupies residues 5 to 25 (LAAIANSGPISIFSYCVSSIL). The Lumenal segment spans residues 26 to 36 (MTVTNKYVLSG). Residues 37–57 (FSFNMNFLLLAVQSIVCIVTI) form a helical membrane-spanning segment. The Cytoplasmic portion of the chain corresponds to 58 to 78 (GSLKSFGVITYRQFNKEEARK). Residues 79–93 (WSPIAVLLVIMIYTS) form a helical membrane-spanning segment. Residues 94–102 (SKALQYLSI) are Lumenal-facing. Residues 103-125 (PVYTIFKNLTIILIAYGEVLWFG) form a helical membrane-spanning segment. The Cytoplasmic portion of the chain corresponds to 126 to 131 (GKVTTM). Residues 132 to 149 (ALSSFLLMVFSSVVAWYG) traverse the membrane as a helical segment. The Lumenal segment spans residues 150–163 (DEAVSGSGNESFIA). An N-linked (GlcNAc...) asparagine glycan is attached at Asn158. The chain crosses the membrane as a helical span at residues 164–184 (LYLGYFWMATNCFASAAFVLI). The Cytoplasmic portion of the chain corresponds to 185–207 (MRKRIKLTNFKDFDTMYYNNLLS). A helical membrane pass occupies residues 208-228 (IPILLASSIIFEDWSAENLAV). The Lumenal portion of the chain corresponds to 229–238 (NFPSDNRTAT). Asn234 is a glycosylation site (N-linked (GlcNAc...) asparagine). Residues 239–259 (IAAMVLSGASSVGISYCSAWC) traverse the membrane as a helical segment. Over 260 to 266 (VRVTSST) the chain is Cytoplasmic. A helical membrane pass occupies residues 267-289 (TYSMVGALNKLPIALSGLVFFPA). At 290 to 292 (AVN) the chain is on the lumenal side. The chain crosses the membrane as a helical span at residues 293–312 (FWSVASIFVGFAAGLVYAVA). The Cytoplasmic portion of the chain corresponds to 313–327 (KQRQQKENVSLPSSK).

It belongs to the TPT transporter family. SLC35D subfamily. In terms of assembly, homooligomer.

The protein resides in the golgi apparatus membrane. The protein localises to the cytoplasmic vesicle membrane. Its subcellular location is the endoplasmic reticulum membrane. Involved in the import of GDP-mannose from the cytoplasm into the Golgi lumen. The sequence is that of GDP-mannose transporter (VRG4) from Scheffersomyces stipitis (strain ATCC 58785 / CBS 6054 / NBRC 10063 / NRRL Y-11545) (Yeast).